A 557-amino-acid polypeptide reads, in one-letter code: E3 ubiquitin-protein ligase ARIH1 (557 aa).

The span at 1–47 (MDSDEGYNYEFDEDEECSEEDSGAEEEEDEDDDEPDDDTLDLGEVEL) shows a compositional bias: acidic residues. Residues 1–95 (MDSDEGYNYE…GGGGGPGHEQ (95 aa)) form a disordered region. A compositionally biased stretch (gly residues) spans 65 to 92 (ETGGGGGSALGPGGGGGGGGGGGGGGPG). Residues 105-153 (TAEQILQHMVECIREVNEVIQNPATITRILLSHFNWDKEKLMERYFDGN) form a UBA-like region. K142 is modified (N6-acetyllysine). The segment at 182–393 (QDMPCQICYL…SAWYNCNRYN (212 aa)) is TRIAD supradomain. Zn(2+) is bound by residues C186, C189, C203, H205, C208, C211, C231, C236, C276, C281, C297, C299, C304, C307, H312, C317, C344, and C347. The segment at 186–236 (CQICYLNYPNSYFTGLECGHKFCMQCWSEYLTTKIMEEGMGQTISCPAHGC) adopts an RING-type 1 zinc-finger fold. Residues 256-317 (LKYQHLITNS…GENWHDPVKC (62 aa)) form an IBR-type zinc finger. The RING-type 2; atypical zinc-finger motif lies at 344–375 (CPKCHVTIEKDGGCNHMVCRNQNCKAEFCWVC). C357 is a catalytic residue. Positions 362, 367, 372, 375, 382, and 389 each coordinate Zn(2+). The interval 408 to 557 (RAALQRYLFY…EKDLWEYIED (150 aa)) is ariadne domain.

It belongs to the RBR family. Ariadne subfamily. In terms of assembly, interacts (via the first RING-type zinc finger) with UBE2L3. Associates with cullin-RING ubiquitin ligase (CRL) complexes containing CUL1, CUL2 and CUL3. Interacts with neddylated CUL1. Interacts with neddylated CUL2. Interacts with neddylated CUL3. Interacts with neddylated CUL4A. Widely expressed.

It localises to the cytoplasm. The protein resides in the nucleus. Its subcellular location is the cajal body. The catalysed reaction is [E2 ubiquitin-conjugating enzyme]-S-ubiquitinyl-L-cysteine + [acceptor protein]-L-lysine = [E2 ubiquitin-conjugating enzyme]-L-cysteine + [acceptor protein]-N(6)-ubiquitinyl-L-lysine.. Its pathway is protein modification; protein ubiquitination. Its activity is regulated as follows. Autoinhibited by the ariadne domain, which masks the second RING-type zinc finger that contains the active site and inhibits the E3 activity. Inhibition is relieved upon binding to neddylated cullin-RING ubiquitin ligase complexes, which activate the E3 ligase activity of ARIH1. Its function is as follows. E3 ubiquitin-protein ligase, which catalyzes ubiquitination of target proteins together with ubiquitin-conjugating enzyme E2 UBE2L3. Acts as an atypical E3 ubiquitin-protein ligase by working together with cullin-RING ubiquitin ligase (CRL) complexes and initiating ubiquitination of CRL substrates: associates with CRL complexes and specifically mediates addition of the first ubiquitin on CRLs targets. The initial ubiquitin is then elongated by CDC34/UBE2R1 and UBE2R2. E3 ubiquitin-protein ligase activity is activated upon binding to neddylated cullin-RING ubiquitin ligase complexes. Plays a role in protein translation in response to DNA damage by mediating ubiquitination of EIF4E2, the consequences of EIF4E2 ubiquitination are however unclear. According to a report, EIF4E2 ubiquitination leads to promote EIF4E2 cap-binding and protein translation arrest. According to another report EIF4E2 ubiquitination leads to its subsequent degradation. Acts as the ligase involved in ISGylation of EIF4E2. In vitro, controls the degradation of the LINC (LInker of Nucleoskeleton and Cytoskeleton) complex member SUN2 and may therefore have a role in the formation and localization of the LINC complex, and as a consequence, nuclear subcellular localization and nuclear morphology. In Homo sapiens (Human), this protein is E3 ubiquitin-protein ligase ARIH1.